Reading from the N-terminus, the 132-residue chain is Large ribosomal subunit protein bL17 (132 aa).

This sequence belongs to the bacterial ribosomal protein bL17 family. In terms of assembly, part of the 50S ribosomal subunit. Contacts protein L32.

This is Large ribosomal subunit protein bL17 from Ralstonia pickettii (strain 12J).